A 588-amino-acid polypeptide reads, in one-letter code: MDANDDPDEDHLTSYDVQLSIQESIEAGKTVFYPERFVPLSDQNRKLVEAIQQGHILELQEYVKYKYALDEADEKGWFPLHEAVVQPIQQILEVVLDASYKTLWEFKTSDGETPLTLAVKAGLVENVRTLLEKGVWPNTKNDKGETPLLLAIKRGSYDMVSALLKHNTSLDQPCVKRWSAMHEAAKQGHKDIIALLLNNGGNVHLKDGFGVTPLGVAAEYGHCDVLEHLIHKGGDVLALADDGASVLFEAAGGGNPDCISLLLEYGGSGNIPNRAGHLPIHRAAYEGHYLALKYLIPVTSKHAIQKSGLTPIHSAADGQNAQCLELLIENGFDVNSLLADHISESYDDERKTALYFAVCNNDILCTEILLAAGADPNLDPLNCLLVAVRANNHEIVRLLLAHGANVNCYFMHVNDTRFPSAIQYALNDEVMLRLLLNNGYQVEMCFECMHGDIFGNSFVWSEIEEEVLPGWTSCVIKDNPFCEFITVPWMKHLVGSVIRVLIDYMDYIPLCAKLKSALEVQREWPEIRQILENPCSLKHLCRLKIRRLMGLQRLCQPTLMEKLSLPPTIQRYILFKEYDLYGQELNLP.

ANK repeat units follow at residues 75-104 (KGWF…KTLW), 110-139 (DGET…WPNT), 143-172 (KGET…SLDQ), 176-205 (KRWS…NVHL), 209-238 (FGVT…DVLA), 242-271 (DGAS…SGNI), 275-304 (AGHL…KHAI), 307-336 (SGLT…DVNS), 349-378 (ERKT…DPNL), 379-408 (DPLN…NVNC), and 416-444 (TRFP…QVEM). The region spanning 524-579 (WPEIRQILENPCSLKHLCRLKIRRLMGLQRLCQPTLMEKLSLPPTIQRYILFKEYD) is the SOCS box domain.

The protein belongs to the ankyrin SOCS box (ASB) family.

Its pathway is protein modification; protein ubiquitination. Its function is as follows. May be a substrate-recognition component of a SCF-like ECS (Elongin-Cullin-SOCS-box protein) E3 ubiquitin-protein ligase complex which mediates the ubiquitination and subsequent proteasomal degradation of target proteins. The protein is Ankyrin repeat and SOCS box protein 15 (ASB15) of Bos taurus (Bovine).